Reading from the N-terminus, the 446-residue chain is Na(+)-translocating NADH-quinone reductase subunit A (446 aa).

Belongs to the NqrA family. Composed of six subunits; NqrA, NqrB, NqrC, NqrD, NqrE and NqrF.

The catalysed reaction is a ubiquinone + n Na(+)(in) + NADH + H(+) = a ubiquinol + n Na(+)(out) + NAD(+). Its function is as follows. NQR complex catalyzes the reduction of ubiquinone-1 to ubiquinol by two successive reactions, coupled with the transport of Na(+) ions from the cytoplasm to the periplasm. NqrA to NqrE are probably involved in the second step, the conversion of ubisemiquinone to ubiquinol. This is Na(+)-translocating NADH-quinone reductase subunit A from Vibrio campbellii (strain ATCC BAA-1116).